The chain runs to 129 residues: Holo-[acyl-carrier-protein] synthase (129 aa).

Residues Asp8 and Glu58 each contribute to the Mg(2+) site.

This sequence belongs to the P-Pant transferase superfamily. AcpS family. Requires Mg(2+) as cofactor.

The protein resides in the cytoplasm. It carries out the reaction apo-[ACP] + CoA = holo-[ACP] + adenosine 3',5'-bisphosphate + H(+). In terms of biological role, transfers the 4'-phosphopantetheine moiety from coenzyme A to a Ser of acyl-carrier-protein. The chain is Holo-[acyl-carrier-protein] synthase from Geobacillus kaustophilus (strain HTA426).